The sequence spans 193 residues: Peptidyl-tRNA hydrolase (193 aa).

Y15 provides a ligand contact to tRNA. The active-site Proton acceptor is H20. F65, N67, and N113 together coordinate tRNA.

The protein belongs to the PTH family. Monomer.

It localises to the cytoplasm. It carries out the reaction an N-acyl-L-alpha-aminoacyl-tRNA + H2O = an N-acyl-L-amino acid + a tRNA + H(+). Hydrolyzes ribosome-free peptidyl-tRNAs (with 1 or more amino acids incorporated), which drop off the ribosome during protein synthesis, or as a result of ribosome stalling. Functionally, catalyzes the release of premature peptidyl moieties from peptidyl-tRNA molecules trapped in stalled 50S ribosomal subunits, and thus maintains levels of free tRNAs and 50S ribosomes. In Ehrlichia ruminantium (strain Welgevonden), this protein is Peptidyl-tRNA hydrolase.